Reading from the N-terminus, the 195-residue chain is Granulocyte colony-stimulating factor (195 aa).

The first 21 residues, 1–21 (MKLMALQLLLWHIALWMVPEA), serve as a signal peptide directing secretion. Cystine bridges form between Cys57/Cys63 and Cys85/Cys95. Thr154 carries an O-linked (GalNAc...) threonine glycan.

Belongs to the IL-6 superfamily. As to quaternary structure, monomer. O-glycosylated.

It localises to the secreted. Granulocyte/macrophage colony-stimulating factors are cytokines that act in hematopoiesis by controlling the production, differentiation, and function of 2 related white cell populations of the blood, the granulocytes and the monocytes-macrophages. This CSF induces granulocytes. The sequence is that of Granulocyte colony-stimulating factor (CSF3) from Sus scrofa (Pig).